The chain runs to 241 residues: MNNNITKKIILSTTLLLLGTASTQFPNTPINSSSEAKAYYINQNETNVNELTKYYSQKYLTFSNSTLWQKDNGTIHATLLQFSWYSHIQVYGPESWGNINQLRNKSVDIFGIKDQETIDSFALSQETFTGGVTPAATSNDKHYKLNVTYKDKAETFTGGFPVYEGNKPVLTLKELDFRIRQTLIKSKKLYNNSYNKGQIKITGADNNYTIDLSKRLPSTDANRYVKKPQNAKIEVILEKSN.

An N-terminal signal peptide occupies residues 1-26; it reads MNNNITKKIILSTTLLLLGTASTQFP.

The protein belongs to the staphylococcal/streptococcal toxin family. As to quaternary structure, interacts with host FPR2; this interaction promotes neutrophil chemotaxis.

Acts as a pathogen alarming molecule by acting on host neutrophil chemotactic factors FPR2. Plays a role of chemoattractant and induces degranulation and oxidative burst in neutrophils. This Staphylococcus aureus (strain Newman) protein is Superantigen-like protein 13.